The sequence spans 102 residues: Large ribosomal subunit protein bL21 (102 aa).

The protein belongs to the bacterial ribosomal protein bL21 family. As to quaternary structure, part of the 50S ribosomal subunit. Contacts protein L20.

Functionally, this protein binds to 23S rRNA in the presence of protein L20. The protein is Large ribosomal subunit protein bL21 of Stenotrophomonas maltophilia (strain K279a).